Consider the following 119-residue polypeptide: Large ribosomal subunit protein bL19 (119 aa).

This sequence belongs to the bacterial ribosomal protein bL19 family.

Its function is as follows. This protein is located at the 30S-50S ribosomal subunit interface and may play a role in the structure and function of the aminoacyl-tRNA binding site. This is Large ribosomal subunit protein bL19 from Arthrobacter sp. (strain FB24).